The sequence spans 123 residues: Class II hydrophobin 2 (123 aa).

The first 16 residues, 1-16 (MRSFLVIATLAVGAFG), serve as a signal peptide directing secretion. 4 cysteine pairs are disulfide-bonded: Cys22/Cys70, Cys32/Cys61, Cys33/Cys45, and Cys71/Cys82.

It belongs to the cerato-ulmin hydrophobin family. In terms of assembly, homodimer. Homodimers further self-assemble to form highly ordered films at water-air interfaces through intermolecular interactions.

The protein resides in the secreted. It localises to the cell wall. Its function is as follows. Aerial growth, conidiation, and dispersal of filamentous fungi in the environment rely upon a capability of their secreting small amphipathic proteins called hydrophobins (HPBs) with low sequence identity. Class I can self-assemble into an outermost layer of rodlet bundles on aerial cell surfaces, conferring cellular hydrophobicity that supports fungal growth, development and dispersal; whereas Class II form highly ordered films at water-air interfaces through intermolecular interactions but contribute nothing to the rodlet structure. Hyd2 is a class II hydrophobin that plays probably a role in intraspecific signaling or hyphal fusion. Not necessary for root adhesion and colonization. Might play an essential role since no deletion mutants could be obtained. This Bionectria ochroleuca (Gliocladium roseum) protein is Class II hydrophobin 2.